The following is a 374-amino-acid chain: Chaperone protein DnaJ (374 aa).

The 67-residue stretch at 5 to 71 (DLYAILGVCR…QKRASYDRFG (67 aa)) folds into the J domain. A CR-type zinc finger spans residues 132-210 (GVEKQIRIAT…CQGTGRVKDT (79 aa)). Zn(2+) contacts are provided by cysteine 145, cysteine 148, cysteine 162, cysteine 165, cysteine 184, cysteine 187, cysteine 198, and cysteine 201. CXXCXGXG motif repeat units follow at residues 145–152 (CGECHGSG), 162–169 (CPTCNGAG), 184–191 (CPTCHGRG), and 198–205 (CNKCQGTG).

It belongs to the DnaJ family. In terms of assembly, homodimer. Zn(2+) is required as a cofactor.

It localises to the cytoplasm. In terms of biological role, participates actively in the response to hyperosmotic and heat shock by preventing the aggregation of stress-denatured proteins and by disaggregating proteins, also in an autonomous, DnaK-independent fashion. Unfolded proteins bind initially to DnaJ; upon interaction with the DnaJ-bound protein, DnaK hydrolyzes its bound ATP, resulting in the formation of a stable complex. GrpE releases ADP from DnaK; ATP binding to DnaK triggers the release of the substrate protein, thus completing the reaction cycle. Several rounds of ATP-dependent interactions between DnaJ, DnaK and GrpE are required for fully efficient folding. Also involved, together with DnaK and GrpE, in the DNA replication of plasmids through activation of initiation proteins. The protein is Chaperone protein DnaJ of Dichelobacter nodosus (strain VCS1703A).